The chain runs to 473 residues: Argininosuccinate lyase (473 aa).

The protein belongs to the lyase 1 family. Argininosuccinate lyase subfamily.

It is found in the cytoplasm. The enzyme catalyses 2-(N(omega)-L-arginino)succinate = fumarate + L-arginine. It functions in the pathway amino-acid biosynthesis; L-arginine biosynthesis; L-arginine from L-ornithine and carbamoyl phosphate: step 3/3. In Mycobacteroides abscessus (strain ATCC 19977 / DSM 44196 / CCUG 20993 / CIP 104536 / JCM 13569 / NCTC 13031 / TMC 1543 / L948) (Mycobacterium abscessus), this protein is Argininosuccinate lyase.